Consider the following 349-residue polypeptide: tRNA pseudouridine synthase D (349 aa).

F27 serves as a coordination point for substrate. D80 serves as the catalytic Nucleophile. N129 is a binding site for substrate. Positions 155–303 (GVPNYFGAQR…VEAARRAMLL (149 aa)) constitute a TRUD domain. F329 serves as a coordination point for substrate.

It belongs to the pseudouridine synthase TruD family.

It carries out the reaction uridine(13) in tRNA = pseudouridine(13) in tRNA. In terms of biological role, responsible for synthesis of pseudouridine from uracil-13 in transfer RNAs. The sequence is that of tRNA pseudouridine synthase D from Shigella boydii serotype 18 (strain CDC 3083-94 / BS512).